Consider the following 515-residue polypeptide: Aldehyde dehydrogenase (515 aa).

A compositionally biased stretch (polar residues) spans 1–12 (MTVAEQQPQHQG). The tract at residues 1-20 (MTVAEQQPQHQGYANPGTPG) is disordered. 228-234 (GFGLEAG) is an NAD(+) binding site. Catalysis depends on residues Glu-272 and Cys-311.

It belongs to the aldehyde dehydrogenase family.

The catalysed reaction is an aldehyde + NAD(+) + H2O = a carboxylate + NADH + 2 H(+). The protein is Aldehyde dehydrogenase (aldA) of Deinococcus radiodurans (strain ATCC 13939 / DSM 20539 / JCM 16871 / CCUG 27074 / LMG 4051 / NBRC 15346 / NCIMB 9279 / VKM B-1422 / R1).